The sequence spans 460 residues: UDP-N-acetylmuramoylalanine--D-glutamate ligase (460 aa).

Residue 120-126 (GSNGKTT) coordinates ATP.

Belongs to the MurCDEF family.

The protein resides in the cytoplasm. The catalysed reaction is UDP-N-acetyl-alpha-D-muramoyl-L-alanine + D-glutamate + ATP = UDP-N-acetyl-alpha-D-muramoyl-L-alanyl-D-glutamate + ADP + phosphate + H(+). The protein operates within cell wall biogenesis; peptidoglycan biosynthesis. In terms of biological role, cell wall formation. Catalyzes the addition of glutamate to the nucleotide precursor UDP-N-acetylmuramoyl-L-alanine (UMA). The sequence is that of UDP-N-acetylmuramoylalanine--D-glutamate ligase from Lactobacillus johnsonii (strain CNCM I-12250 / La1 / NCC 533).